The sequence spans 466 residues: Glutamyl-tRNA reductase (466 aa).

Residues 47–50 (TCNR), Ser-107, 112–114 (EQQ), and Gln-118 each bind substrate. Cys-48 functions as the Nucleophile in the catalytic mechanism. 194–199 (GAGAMS) contributes to the NADP(+) binding site.

Belongs to the glutamyl-tRNA reductase family. In terms of assembly, homodimer.

The catalysed reaction is (S)-4-amino-5-oxopentanoate + tRNA(Glu) + NADP(+) = L-glutamyl-tRNA(Glu) + NADPH + H(+). It participates in porphyrin-containing compound metabolism; protoporphyrin-IX biosynthesis; 5-aminolevulinate from L-glutamyl-tRNA(Glu): step 1/2. In terms of biological role, catalyzes the NADPH-dependent reduction of glutamyl-tRNA(Glu) to glutamate 1-semialdehyde (GSA). This chain is Glutamyl-tRNA reductase, found in Corynebacterium efficiens (strain DSM 44549 / YS-314 / AJ 12310 / JCM 11189 / NBRC 100395).